A 353-amino-acid chain; its full sequence is MLYSLLYGYFNINLFQYLTFRAGLGFFIAFFLTLFLMPKFILWAKAKKANQPISSFVPSHQNKKDTPTMGGIVFVFATIVASVLCASLGNLYVLLGLIVLVGFSFVGFRDDYTKINQQSNAGMSAKMKFGMLFILSLIVSVLLSLKGLDTFLYAPFLKNPLFEMPTMLAVGFWVLVFLSTSNAVNLTDGLDGLASVPSIFTLLSLSIFVYVAGNAEFSKYLLYPKVIDVGELFVVSLALVGSLFGFLWYNCNPASVFMGDSGSLALGGFIAYNAIVSHNEILLVLMGSIFVIETLSVILQVGSYKTRKKRLFLMAPIHHHFEQKGWAENKVIVRFWIISMLSNLVALLSLKVR.

The next 10 membrane-spanning stretches (helical) occupy residues 24–44, 66–86, 88–108, 129–149, 160–180, 192–212, 229–249, 256–276, 281–301, and 330–350; these read LGFF…ILWA, TPTM…VLCA, LGNL…FVGF, FGML…KGLD, PLFE…FLST, GLAS…VYVA, VGEL…FLWY, VFMG…NAIV, ILLV…ILQV, and KVIV…LLSL.

Belongs to the glycosyltransferase 4 family. MraY subfamily. The cofactor is Mg(2+).

The protein resides in the cell inner membrane. The enzyme catalyses UDP-N-acetyl-alpha-D-muramoyl-L-alanyl-gamma-D-glutamyl-meso-2,6-diaminopimeloyl-D-alanyl-D-alanine + di-trans,octa-cis-undecaprenyl phosphate = di-trans,octa-cis-undecaprenyl diphospho-N-acetyl-alpha-D-muramoyl-L-alanyl-D-glutamyl-meso-2,6-diaminopimeloyl-D-alanyl-D-alanine + UMP. The protein operates within cell wall biogenesis; peptidoglycan biosynthesis. Functionally, catalyzes the initial step of the lipid cycle reactions in the biosynthesis of the cell wall peptidoglycan: transfers peptidoglycan precursor phospho-MurNAc-pentapeptide from UDP-MurNAc-pentapeptide onto the lipid carrier undecaprenyl phosphate, yielding undecaprenyl-pyrophosphoryl-MurNAc-pentapeptide, known as lipid I. The polypeptide is Phospho-N-acetylmuramoyl-pentapeptide-transferase (Helicobacter pylori (strain ATCC 700392 / 26695) (Campylobacter pylori)).